Here is a 379-residue protein sequence, read N- to C-terminus: Cytochrome b (379 aa).

4 helical membrane-spanning segments follow: residues 33-53, 77-98, 113-133, and 178-198; these read FGSL…FLAM, WLIR…SIHA, WNIG…GYVL, and FFAF…VHLL. Residues H83 and H97 each coordinate heme b. Heme b contacts are provided by H182 and H196. Residue H201 coordinates a ubiquinone. 4 helical membrane passes run 226-246, 288-308, 320-340, and 347-367; these read IKDL…ALFF, LGGV…PLLN, ITQT…WIGG, and FTMI…ILMP.

The protein belongs to the cytochrome b family. As to quaternary structure, the cytochrome bc1 complex contains 11 subunits: 3 respiratory subunits (MT-CYB, CYC1 and UQCRFS1), 2 core proteins (UQCRC1 and UQCRC2) and 6 low-molecular weight proteins (UQCRH/QCR6, UQCRB/QCR7, UQCRQ/QCR8, UQCR10/QCR9, UQCR11/QCR10 and a cleavage product of UQCRFS1). This cytochrome bc1 complex then forms a dimer. Requires heme b as cofactor.

It is found in the mitochondrion inner membrane. In terms of biological role, component of the ubiquinol-cytochrome c reductase complex (complex III or cytochrome b-c1 complex) that is part of the mitochondrial respiratory chain. The b-c1 complex mediates electron transfer from ubiquinol to cytochrome c. Contributes to the generation of a proton gradient across the mitochondrial membrane that is then used for ATP synthesis. This chain is Cytochrome b (MT-CYB), found in Thaptomys nigrita (Blackish grass mouse).